The primary structure comprises 185 residues: Transcription antitermination protein NusB (185 aa).

It belongs to the NusB family.

Functionally, involved in transcription antitermination. Required for transcription of ribosomal RNA (rRNA) genes. Binds specifically to the boxA antiterminator sequence of the ribosomal RNA (rrn) operons. The sequence is that of Transcription antitermination protein NusB from Rhodospirillum rubrum (strain ATCC 11170 / ATH 1.1.1 / DSM 467 / LMG 4362 / NCIMB 8255 / S1).